Consider the following 813-residue polypeptide: Ankyrin repeat domain-containing protein SOWAHB (813 aa).

Disordered stretches follow at residues 142–256 and 400–436; these read SAAP…QSLS and ETCG…DSHK. A compositionally biased stretch (basic and acidic residues) spans 158–176; sequence MSEKARVNPSHWDTKRYYP. The span at 177–189 shows a compositional bias: pro residues; sequence EDPPVPDSLPVSP. Positions 191–202 are enriched in polar residues; it reads CTNTRQSSFTST. Residues 208–244 show a composition bias toward low complexity; the sequence is HSLSSNNLSSSFSSPESPGLVAKPYNASPSPAGSSPN. Residues 245–256 show a composition bias toward polar residues; it reads IREQTPKSQSLS. Residues 400–416 are compositionally biased toward acidic residues; the sequence is ETCGSEESDSGEGGDCD. 2 ANK repeats span residues 657–686 and 696–726; these read TGYT…KAGI and NGYT…NVKV.

This sequence belongs to the SOWAH family.

The protein is Ankyrin repeat domain-containing protein SOWAHB (sowahb) of Xenopus laevis (African clawed frog).